The sequence spans 199 residues: Recombination protein RecR (199 aa).

The C4-type zinc-finger motif lies at 58-73 (CSVCNNITDVDPCVFC). In terms of domain architecture, Toprim spans 81–176 (RLVCVVEEPT…RLTRIATGVP (96 aa)).

Belongs to the RecR family.

May play a role in DNA repair. It seems to be involved in an RecBC-independent recombinational process of DNA repair. It may act with RecF and RecO. The sequence is that of Recombination protein RecR from Acidobacterium capsulatum (strain ATCC 51196 / DSM 11244 / BCRC 80197 / JCM 7670 / NBRC 15755 / NCIMB 13165 / 161).